We begin with the raw amino-acid sequence, 269 residues long: Formamidopyrimidine-DNA glycosylase (269 aa).

Proline 2 acts as the Schiff-base intermediate with DNA in catalysis. The Proton donor role is filled by glutamate 3. Residue lysine 57 is the Proton donor; for beta-elimination activity of the active site. Residues histidine 90, arginine 109, and lysine 150 each contribute to the DNA site. The FPG-type zinc-finger motif lies at 235–269; it reads QVYGKAGESCPECGEAIQELKIGQRNTFYCSYCQC. The Proton donor; for delta-elimination activity role is filled by arginine 259.

The protein belongs to the FPG family. As to quaternary structure, monomer. Zn(2+) serves as cofactor.

The catalysed reaction is Hydrolysis of DNA containing ring-opened 7-methylguanine residues, releasing 2,6-diamino-4-hydroxy-5-(N-methyl)formamidopyrimidine.. It carries out the reaction 2'-deoxyribonucleotide-(2'-deoxyribose 5'-phosphate)-2'-deoxyribonucleotide-DNA = a 3'-end 2'-deoxyribonucleotide-(2,3-dehydro-2,3-deoxyribose 5'-phosphate)-DNA + a 5'-end 5'-phospho-2'-deoxyribonucleoside-DNA + H(+). Its function is as follows. Involved in base excision repair of DNA damaged by oxidation or by mutagenic agents. Acts as a DNA glycosylase that recognizes and removes damaged bases. Has a preference for oxidized purines, such as 7,8-dihydro-8-oxoguanine (8-oxoG). Has AP (apurinic/apyrimidinic) lyase activity and introduces nicks in the DNA strand. Cleaves the DNA backbone by beta-delta elimination to generate a single-strand break at the site of the removed base with both 3'- and 5'-phosphates. The protein is Formamidopyrimidine-DNA glycosylase of Vibrio vulnificus (strain YJ016).